Reading from the N-terminus, the 224-residue chain is Lipoprotein-releasing system ATP-binding protein LolD (224 aa).

Positions Leu-4–Ala-224 constitute an ABC transporter domain. Residue Gly-40–Ser-47 coordinates ATP.

Belongs to the ABC transporter superfamily. Lipoprotein translocase (TC 3.A.1.125) family. The complex is composed of two ATP-binding proteins (LolD) and two transmembrane proteins (LolC and LolE).

The protein localises to the cell inner membrane. In terms of biological role, part of the ABC transporter complex LolCDE involved in the translocation of mature outer membrane-directed lipoproteins, from the inner membrane to the periplasmic chaperone, LolA. Responsible for the formation of the LolA-lipoprotein complex in an ATP-dependent manner. The protein is Lipoprotein-releasing system ATP-binding protein LolD of Myxococcus xanthus (strain DK1622).